A 414-amino-acid polypeptide reads, in one-letter code: 2,3-diketo-5-methylthiopentyl-1-phosphate enolase (414 aa).

Lysine 99 acts as the Proton acceptor in catalysis. Substrate-binding positions include lysine 148, 174-177 (KDDE), histidine 265, glycine 338, and 360-361 (GG). Residues lysine 174, aspartate 176, and glutamate 177 each coordinate Mg(2+). Position 174 is an N6-carboxylysine (lysine 174).

The protein belongs to the RuBisCO large chain family. Type IV subfamily. As to quaternary structure, homodimer. Mg(2+) serves as cofactor.

The catalysed reaction is 5-methylsulfanyl-2,3-dioxopentyl phosphate = 2-hydroxy-5-methylsulfanyl-3-oxopent-1-enyl phosphate. It participates in amino-acid biosynthesis; L-methionine biosynthesis via salvage pathway; L-methionine from S-methyl-5-thio-alpha-D-ribose 1-phosphate: step 3/6. Its function is as follows. Catalyzes the enolization of 2,3-diketo-5-methylthiopentyl-1-phosphate (DK-MTP-1-P) into 2-hydroxy-3-keto-5-methylthiopentenyl-1-phosphate (HK-MTPenyl-1-P). The chain is 2,3-diketo-5-methylthiopentyl-1-phosphate enolase from Bacillus cereus (strain AH187).